The following is a 297-amino-acid chain: Pyridoxal 5'-phosphate synthase subunit PdxS (297 aa).

Aspartate 27 provides a ligand contact to D-ribose 5-phosphate. The active-site Schiff-base intermediate with D-ribose 5-phosphate is lysine 84. D-ribose 5-phosphate is bound at residue glycine 156. Arginine 168 is a D-glyceraldehyde 3-phosphate binding site. Residues glycine 217 and 238–239 (GS) each bind D-ribose 5-phosphate.

This sequence belongs to the PdxS/SNZ family. In terms of assembly, in the presence of PdxT, forms a dodecamer of heterodimers.

The catalysed reaction is aldehydo-D-ribose 5-phosphate + D-glyceraldehyde 3-phosphate + L-glutamine = pyridoxal 5'-phosphate + L-glutamate + phosphate + 3 H2O + H(+). The protein operates within cofactor biosynthesis; pyridoxal 5'-phosphate biosynthesis. In terms of biological role, catalyzes the formation of pyridoxal 5'-phosphate from ribose 5-phosphate (RBP), glyceraldehyde 3-phosphate (G3P) and ammonia. The ammonia is provided by the PdxT subunit. Can also use ribulose 5-phosphate and dihydroxyacetone phosphate as substrates, resulting from enzyme-catalyzed isomerization of RBP and G3P, respectively. The sequence is that of Pyridoxal 5'-phosphate synthase subunit PdxS from Corynebacterium efficiens (strain DSM 44549 / YS-314 / AJ 12310 / JCM 11189 / NBRC 100395).